Consider the following 251-residue polypeptide: Probable transcriptional regulatory protein jk1057 (251 aa).

A disordered region spans residues 1 to 22 (MAGHSKWATTKHKKAANDAKRG).

It belongs to the TACO1 family.

The protein resides in the cytoplasm. The protein is Probable transcriptional regulatory protein jk1057 of Corynebacterium jeikeium (strain K411).